The chain runs to 79 residues: Small ribosomal subunit protein bS18 (79 aa).

The protein belongs to the bacterial ribosomal protein bS18 family. Part of the 30S ribosomal subunit. Forms a tight heterodimer with protein bS6.

Functionally, binds as a heterodimer with protein bS6 to the central domain of the 16S rRNA, where it helps stabilize the platform of the 30S subunit. This is Small ribosomal subunit protein bS18 from Bacillus velezensis (strain DSM 23117 / BGSC 10A6 / LMG 26770 / FZB42) (Bacillus amyloliquefaciens subsp. plantarum).